Reading from the N-terminus, the 527-residue chain is 4-alpha-glucanotransferase (527 aa).

Belongs to the disproportionating enzyme family.

It is found in the cytoplasm. It catalyses the reaction Transfers a segment of a (1-&gt;4)-alpha-D-glucan to a new position in an acceptor, which may be glucose or a (1-&gt;4)-alpha-D-glucan.. The polypeptide is 4-alpha-glucanotransferase (malQ) (Chlamydia trachomatis serovar D (strain ATCC VR-885 / DSM 19411 / UW-3/Cx)).